A 340-amino-acid polypeptide reads, in one-letter code: tRNA N6-adenosine threonylcarbamoyltransferase (340 aa).

Fe cation contacts are provided by histidine 111 and histidine 115. Residues 134 to 138 (LVSGG), aspartate 167, glycine 180, and asparagine 276 contribute to the substrate site. Position 304 (aspartate 304) interacts with Fe cation.

Belongs to the KAE1 / TsaD family. Fe(2+) is required as a cofactor.

Its subcellular location is the cytoplasm. The enzyme catalyses L-threonylcarbamoyladenylate + adenosine(37) in tRNA = N(6)-L-threonylcarbamoyladenosine(37) in tRNA + AMP + H(+). Required for the formation of a threonylcarbamoyl group on adenosine at position 37 (t(6)A37) in tRNAs that read codons beginning with adenine. Is involved in the transfer of the threonylcarbamoyl moiety of threonylcarbamoyl-AMP (TC-AMP) to the N6 group of A37, together with TsaE and TsaB. TsaD likely plays a direct catalytic role in this reaction. The polypeptide is tRNA N6-adenosine threonylcarbamoyltransferase (Helicobacter pylori (strain Shi470)).